The following is a 104-amino-acid chain: Large ribosomal subunit protein bL21 (104 aa).

It belongs to the bacterial ribosomal protein bL21 family. In terms of assembly, part of the 50S ribosomal subunit. Contacts protein L20.

Its function is as follows. This protein binds to 23S rRNA in the presence of protein L20. This Granulibacter bethesdensis (strain ATCC BAA-1260 / CGDNIH1) protein is Large ribosomal subunit protein bL21.